The primary structure comprises 127 residues: Glycine cleavage system H protein (127 aa).

The Lipoyl-binding domain occupies 24-105 (TALVGITDFA…YNDGWLVKMK (82 aa)). Position 65 is an N6-lipoyllysine (lysine 65).

It belongs to the GcvH family. As to quaternary structure, the glycine cleavage system is composed of four proteins: P, T, L and H. (R)-lipoate serves as cofactor.

In terms of biological role, the glycine cleavage system catalyzes the degradation of glycine. The H protein shuttles the methylamine group of glycine from the P protein to the T protein. This is Glycine cleavage system H protein from Pelodictyon phaeoclathratiforme (strain DSM 5477 / BU-1).